We begin with the raw amino-acid sequence, 180 residues long: MARLKDRYRQEVAPALKERFGIDNPMRVPTLEKIVVNMGVGEAAQDSRKLDGAMEDLARITGQKPQVRRARKSIAGFKIREGMPVGARVTLRGERMWEFLDRLISVALPRVRDFRGVSPDSFDGRGNYALGVREQLIFPEISYDAVDSVRGLDIAIVTTAETDEEARELLRLLGMPFRPN.

It belongs to the universal ribosomal protein uL5 family. In terms of assembly, part of the 50S ribosomal subunit; part of the 5S rRNA/L5/L18/L25 subcomplex. Contacts the 5S rRNA and the P site tRNA. Forms a bridge to the 30S subunit in the 70S ribosome.

Functionally, this is one of the proteins that bind and probably mediate the attachment of the 5S RNA into the large ribosomal subunit, where it forms part of the central protuberance. In the 70S ribosome it contacts protein S13 of the 30S subunit (bridge B1b), connecting the 2 subunits; this bridge is implicated in subunit movement. Contacts the P site tRNA; the 5S rRNA and some of its associated proteins might help stabilize positioning of ribosome-bound tRNAs. This Rubrobacter xylanophilus (strain DSM 9941 / JCM 11954 / NBRC 16129 / PRD-1) protein is Large ribosomal subunit protein uL5.